Here is a 296-residue protein sequence, read N- to C-terminus: 4-diphosphocytidyl-2-C-methyl-D-erythritol kinase (296 aa).

Residue Lys-14 is part of the active site. 97-107 provides a ligand contact to ATP; the sequence is PMGAGMGGGSS. Residue Asp-139 is part of the active site.

The protein belongs to the GHMP kinase family. IspE subfamily.

The enzyme catalyses 4-CDP-2-C-methyl-D-erythritol + ATP = 4-CDP-2-C-methyl-D-erythritol 2-phosphate + ADP + H(+). The protein operates within isoprenoid biosynthesis; isopentenyl diphosphate biosynthesis via DXP pathway; isopentenyl diphosphate from 1-deoxy-D-xylulose 5-phosphate: step 3/6. In terms of biological role, catalyzes the phosphorylation of the position 2 hydroxy group of 4-diphosphocytidyl-2C-methyl-D-erythritol. The protein is 4-diphosphocytidyl-2-C-methyl-D-erythritol kinase of Polynucleobacter necessarius subsp. necessarius (strain STIR1).